The following is a 132-amino-acid chain: MSNKFLGTWKLVSSENFDDYMKALGVGLATRKLGNLAKPNVIISKKGDIITIRTESTFKNTEISFKLGQEFEETTADNRKTKSIITLERGALNQVQKWDGKETTIKRKLVDGKMVVECKMKGVVCTRIYEKV.

Serine 2 carries the post-translational modification N-acetylserine. Residues arginine 107 and 127–129 each bind (9Z)-octadecenoate; that span reads RIY. Residues arginine 107 and 127–129 contribute to the hexadecanoate site; that span reads RIY.

It belongs to the calycin superfamily. Fatty-acid binding protein (FABP) family. In terms of assembly, monomer.

It is found in the cytoplasm. In terms of biological role, may play a role in lipid transport protein in Schwann cells. May bind cholesterol. The sequence is that of Myelin P2 protein (PMP2) from Oryctolagus cuniculus (Rabbit).